We begin with the raw amino-acid sequence, 241 residues long: Glucosamine-6-phosphate deaminase (241 aa).

The active-site Proton acceptor; for enolization step is Asp-67. The active-site For ring-opening step is the Asn-136. Residue His-138 is the Proton acceptor; for ring-opening step of the active site. Glu-143 acts as the For ring-opening step in catalysis.

It belongs to the glucosamine/galactosamine-6-phosphate isomerase family. NagB subfamily.

It catalyses the reaction alpha-D-glucosamine 6-phosphate + H2O = beta-D-fructose 6-phosphate + NH4(+). It functions in the pathway amino-sugar metabolism; N-acetylneuraminate degradation; D-fructose 6-phosphate from N-acetylneuraminate: step 5/5. In terms of biological role, catalyzes the reversible isomerization-deamination of glucosamine 6-phosphate (GlcN6P) to form fructose 6-phosphate (Fru6P) and ammonium ion. The polypeptide is Glucosamine-6-phosphate deaminase (Halothermothrix orenii (strain H 168 / OCM 544 / DSM 9562)).